We begin with the raw amino-acid sequence, 565 residues long: NAD-dependent malic enzyme (565 aa).

The Proton donor role is filled by Tyr-104. Arg-157 provides a ligand contact to NAD(+). The Proton acceptor role is filled by Lys-175. A divalent metal cation is bound by residues Glu-246, Asp-247, and Asp-270. Residues Asp-270 and Asn-418 each contribute to the NAD(+) site.

This sequence belongs to the malic enzymes family. As to quaternary structure, homotetramer. Mg(2+) is required as a cofactor. Requires Mn(2+) as cofactor.

It catalyses the reaction (S)-malate + NAD(+) = pyruvate + CO2 + NADH. The enzyme catalyses oxaloacetate + H(+) = pyruvate + CO2. This Escherichia coli O157:H7 protein is NAD-dependent malic enzyme.